The following is a 165-amino-acid chain: Selenoprotein F (165 aa).

Residues 1-31 (MVAMAAGPSGCLVPAFGLRLLLATVLQAVSA) form the signal peptide. A non-standard amino acid (selenocysteine) is located at residue selenocysteine 96.

As to quaternary structure, forms a tight complex with UGGT1/UGCGL1. Interacts with UGGT2/UGCGL2. Interacts with RDH11. In terms of processing, the N-terminus is blocked. Higher levels in prostate and thyroid gland.

It localises to the endoplasmic reticulum lumen. May be involved in redox reactions associated with the formation of disulfide bonds. May contribute to the quality control of protein folding in the endoplasmic reticulum. May regulate protein folding by enhancing the catalytic activity of UGGT1/UGCGL1 and UGGT2/UGCGL2. The protein is Selenoprotein F of Homo sapiens (Human).